We begin with the raw amino-acid sequence, 189 residues long: Large ribosomal subunit protein eL20 (189 aa).

The protein belongs to the eukaryotic ribosomal protein eL20 family.

The protein localises to the cytoplasm. The sequence is that of Large ribosomal subunit protein eL20 (RPL18A) from Tetrahymena thermophila.